The chain runs to 463 residues: Protein phosphatase PP2A regulatory subunit B (463 aa).

WD repeat units follow at residues 27–66 (TEADIISAVEFDHTGDYLATGDKGGRVVLFERNHSKKGCE) and 87–128 (EIEE…LKVV). The residue at position 134 (serine 134) is a Phosphoserine. WD repeat units follow at residues 174–212 (AHAYHINSISVNSDAETYISADDLRINLWNLSISDHSFN), 223–263 (ELTE…LCDN), 282–320 (EIISSISDVKFSQNGRYILSRDYLTLKIWDVNMEKAPVK), and 337–378 (ENDC…PGDR).

This sequence belongs to the phosphatase 2A regulatory subunit B family. PP2A exists in several trimeric forms, all of which consist of a core composed of a catalytic subunit associated with a 65 kDa (PR65) (Subunit A) and a 55 kDa (PR55) (Subunit B) regulatory subunit.

In terms of biological role, phosphatase 2A affects a variety of biological processes in the cell such as transcription, cell cycle progression and cellular morphogenesis, and provides an initial identification of critical substrates for this phosphatase. The regulatory subunit may direct the catalytic subunit to distinct, albeit overlapping, subsets of substrates. In Schizosaccharomyces pombe (strain 972 / ATCC 24843) (Fission yeast), this protein is Protein phosphatase PP2A regulatory subunit B (pab1).